The sequence spans 712 residues: Ribosomal RNA large subunit methyltransferase K/L (712 aa).

A THUMP domain is found at Gly-46–Leu-157.

This sequence belongs to the methyltransferase superfamily. RlmKL family.

The protein localises to the cytoplasm. It carries out the reaction guanosine(2445) in 23S rRNA + S-adenosyl-L-methionine = N(2)-methylguanosine(2445) in 23S rRNA + S-adenosyl-L-homocysteine + H(+). The enzyme catalyses guanosine(2069) in 23S rRNA + S-adenosyl-L-methionine = N(2)-methylguanosine(2069) in 23S rRNA + S-adenosyl-L-homocysteine + H(+). In terms of biological role, specifically methylates the guanine in position 2445 (m2G2445) and the guanine in position 2069 (m7G2069) of 23S rRNA. The protein is Ribosomal RNA large subunit methyltransferase K/L of Actinobacillus pleuropneumoniae serotype 3 (strain JL03).